A 919-amino-acid polypeptide reads, in one-letter code: Alanine--tRNA ligase (919 aa).

4 residues coordinate Zn(2+): His565, His569, Cys667, and His671.

Belongs to the class-II aminoacyl-tRNA synthetase family. Zn(2+) is required as a cofactor.

It is found in the cytoplasm. It carries out the reaction tRNA(Ala) + L-alanine + ATP = L-alanyl-tRNA(Ala) + AMP + diphosphate. In terms of biological role, catalyzes the attachment of alanine to tRNA(Ala) in a two-step reaction: alanine is first activated by ATP to form Ala-AMP and then transferred to the acceptor end of tRNA(Ala). Also edits incorrectly charged Ser-tRNA(Ala) and Gly-tRNA(Ala) via its editing domain. The polypeptide is Alanine--tRNA ligase (Leptospira biflexa serovar Patoc (strain Patoc 1 / Ames)).